Reading from the N-terminus, the 335-residue chain is COP9 signalosome complex subunit 5 (335 aa).

The MPN domain occupies 51-187; that stretch reads VRISAVALLK…IGAFRTFPKD (137 aa). Zn(2+) contacts are provided by His-134, His-136, and Asp-147. A JAMM motif motif is present at residues 134–147; it reads HSHPGYGCWLSGID.

Belongs to the peptidase M67A family. CSN5 subfamily. In terms of assembly, component of the COP9 signalosome (CSN) complex.

The protein localises to the cytoplasm. Its subcellular location is the nucleus. Its function is as follows. Catalytic component of the COP9 signalosome (CSN) complex that acts as an regulator of the ubiquitin (Ubl) conjugation pathway by mediating the deneddylation of the cullin subunit of SCF-type E3 ubiquitin-protein ligase complexes. The CSN complex seems to link protein degradation to sexual development. Required for fruit body formation. In Emericella nidulans (strain FGSC A4 / ATCC 38163 / CBS 112.46 / NRRL 194 / M139) (Aspergillus nidulans), this protein is COP9 signalosome complex subunit 5 (rri1).